The chain runs to 198 residues: Ribonuclease HII (198 aa).

One can recognise an RNase H type-2 domain in the interval Gln-10 to Ser-198. Residues Asp-16, Glu-17, and Asp-108 each coordinate a divalent metal cation.

The protein belongs to the RNase HII family. It depends on Mn(2+) as a cofactor. Mg(2+) serves as cofactor.

Its subcellular location is the cytoplasm. The catalysed reaction is Endonucleolytic cleavage to 5'-phosphomonoester.. Endonuclease that specifically degrades the RNA of RNA-DNA hybrids. The chain is Ribonuclease HII from Escherichia coli O45:K1 (strain S88 / ExPEC).